The sequence spans 273 residues: DnaJ homolog subfamily C member 27 (273 aa).

The required for interaction with MAPK1 stretch occupies residues 1–18 (MEASMPKRKEPGKSLRIK). GTP is bound by residues 23-30 (GNAEVGKS), 71-75 (DMAGD), and 134-137 (NKID). The J domain maps to 217–273 (DSWDMLGVKPGASRDEVNKAYRKLAVLLHPDKCVAPGSEDAFKAVVNARTALLKNIK).

This sequence belongs to the small GTPase superfamily. Rab family. As to quaternary structure, interacts directly with MAPK1 (wild-type and kinase-deficient forms). Interacts directly (in GTP-bound form) with MAP2K1 (wild-type and kinase-deficient forms).

It localises to the nucleus. Functionally, GTPase which can activate the MEK/ERK pathway and induce cell transformation when overexpressed. May act as a nuclear scaffold for MAPK1, probably by association with MAPK1 nuclear export signal leading to enhanced ERK1/ERK2 signaling. The sequence is that of DnaJ homolog subfamily C member 27 (DNAJC27) from Bos taurus (Bovine).